Consider the following 164-residue polypeptide: MTIAFYPGSFDPMTNGHLDVLVQALNVVPKVVVGIGIHPGKVPMFSFEERAELIATSLGEAVPLRAGDVSVIAFDGLAVDAARQHGATLLVRGLRDGSDLDYEMQLAGMNRQMAPDLQTVFLPAGTASRPITATLVRQIATMGGDVSAFVPPQVSRALKSRLKT.

Substrate is bound at residue Ser9. Residues 9–10 and His17 each bind ATP; that span reads SF. Residues Lys41, Ala78, and Arg92 each coordinate substrate. ATP is bound by residues 93-95, Glu103, and 128-134; these read GLR and SRPITAT.

It belongs to the bacterial CoaD family. As to quaternary structure, homohexamer. Mg(2+) serves as cofactor.

Its subcellular location is the cytoplasm. The enzyme catalyses (R)-4'-phosphopantetheine + ATP + H(+) = 3'-dephospho-CoA + diphosphate. It functions in the pathway cofactor biosynthesis; coenzyme A biosynthesis; CoA from (R)-pantothenate: step 4/5. Functionally, reversibly transfers an adenylyl group from ATP to 4'-phosphopantetheine, yielding dephospho-CoA (dPCoA) and pyrophosphate. The chain is Phosphopantetheine adenylyltransferase from Allorhizobium ampelinum (strain ATCC BAA-846 / DSM 112012 / S4) (Agrobacterium vitis (strain S4)).